The primary structure comprises 106 residues: Follitropin subunit beta (106 aa).

Intrachain disulfides connect Cys1–Cys49, Cys15–Cys64, Cys18–Cys102, Cys26–Cys80, Cys30–Cys82, and Cys85–Cys92. 2 N-linked (GlcNAc...) asparagine glycosylation sites follow: Asn5 and Asn22.

The protein belongs to the glycoprotein hormones subunit beta family. In terms of assembly, heterodimer. The active follitropin is a heterodimer composed of an alpha chain/CGA shared with other hormones and a unique beta chain/FSHB shown here.

Its subcellular location is the secreted. Together with the alpha chain CGA constitutes follitropin, the follicle-stimulating hormone, and provides its biological specificity to the hormone heterodimer. Binds FSHR, a G protein-coupled receptor, on target cells to activate downstream signaling pathways. Follitropin is involved in follicle development and spermatogenesis in reproductive organs. The polypeptide is Follitropin subunit beta (FSHB) (Struthio camelus (Common ostrich)).